A 599-amino-acid chain; its full sequence is Dictomallein-2 (599 aa).

An N-terminal signal peptide occupies residues 1-20 (MKLILIYLILVFNLFNFINC). Residues 145–407 (PDVGQDYTLK…QNYFKNSIYY (263 aa)) form the Peptidase M66 domain. His298 serves as a coordination point for Zn(2+). Residue Glu299 is part of the active site. His302 and His308 together coordinate Zn(2+).

The protein belongs to the dictomallein family. Zn(2+) is required as a cofactor.

It is found in the secreted. In Dictyostelium discoideum (Social amoeba), this protein is Dictomallein-2 (dtmlB).